A 300-amino-acid chain; its full sequence is Phospholipase A1 (300 aa).

Cysteines 4 and 87 form a disulfide. The active-site Nucleophile is Ser-137. Asp-165 (charge relay system) is an active-site residue. Cystine bridges form between Cys-176–Cys-181 and Cys-218–Cys-227. His-229 serves as the catalytic Charge relay system. Intrachain disulfides connect Cys-244–Cys-268, Cys-245–Cys-293, and Cys-261–Cys-266.

The protein belongs to the AB hydrolase superfamily. Lipase family. In terms of tissue distribution, expressed by the venom gland.

The protein resides in the secreted. The enzyme catalyses a 1,2-diacyl-sn-glycero-3-phosphocholine + H2O = a 2-acyl-sn-glycero-3-phosphocholine + a fatty acid + H(+). Local inflammatory effects are inhibited by antiserotonin drugs (cyproheptadine and methysergide), indomethacin, betamethasone, and antihistamine (chlorpheniramine). Its function is as follows. Catalyzes the hydrolysis of phosphatidylcholine with phospholipase A1 activity. Shows potent hemolytic activity that is responsible for its lethal effect. May act as an allergen. In vivo, induces local inflammatory effects. The sequence is that of Phospholipase A1 from Vespa basalis (Hornet).